Here is a 152-residue protein sequence, read N- to C-terminus: SsrA-binding protein (152 aa).

It belongs to the SmpB family.

The protein localises to the cytoplasm. Required for rescue of stalled ribosomes mediated by trans-translation. Binds to transfer-messenger RNA (tmRNA), required for stable association of tmRNA with ribosomes. tmRNA and SmpB together mimic tRNA shape, replacing the anticodon stem-loop with SmpB. tmRNA is encoded by the ssrA gene; the 2 termini fold to resemble tRNA(Ala) and it encodes a 'tag peptide', a short internal open reading frame. During trans-translation Ala-aminoacylated tmRNA acts like a tRNA, entering the A-site of stalled ribosomes, displacing the stalled mRNA. The ribosome then switches to translate the ORF on the tmRNA; the nascent peptide is terminated with the 'tag peptide' encoded by the tmRNA and targeted for degradation. The ribosome is freed to recommence translation, which seems to be the essential function of trans-translation. This Rickettsia rickettsii protein is SsrA-binding protein.